We begin with the raw amino-acid sequence, 221 residues long: ATP-dependent Clp protease proteolytic subunit 1, mitochondrial (221 aa).

The N-terminal 25 residues, 1 to 25, are a transit peptide targeting the mitochondrion; the sequence is MLRRLVTSSLSASRSMSASVQSRVG. Residue Ser120 is the Nucleophile of the active site. His145 is an active-site residue.

Belongs to the peptidase S14 family. In terms of assembly, tetradecamer that assembles into a two heptameric rings with a central cavity. Expressed in the intestine.

It localises to the mitochondrion matrix. The enzyme catalyses Hydrolysis of proteins to small peptides in the presence of ATP and magnesium. alpha-casein is the usual test substrate. In the absence of ATP, only oligopeptides shorter than five residues are hydrolyzed (such as succinyl-Leu-Tyr-|-NHMec, and Leu-Tyr-Leu-|-Tyr-Trp, in which cleavage of the -Tyr-|-Leu- and -Tyr-|-Trp bonds also occurs).. Functionally, clp cleaves peptides in various proteins in a process that requires ATP hydrolysis. Clp may be responsible for a fairly general and central housekeeping function rather than for the degradation of specific substrates. This is ATP-dependent Clp protease proteolytic subunit 1, mitochondrial (clpp-1) from Caenorhabditis elegans.